The primary structure comprises 272 residues: Diaminopimelate epimerase (272 aa).

The substrate site is built by Asn-11 and Asn-60. Cys-69 (proton donor) is an active-site residue. Residues 70-71 (GN), Asn-181, and 199-200 (ER) contribute to the substrate site. Cys-209 (proton acceptor) is an active-site residue. Substrate is bound at residue 210 to 211 (GT).

The protein belongs to the diaminopimelate epimerase family. As to quaternary structure, homodimer.

The protein resides in the cytoplasm. It carries out the reaction (2S,6S)-2,6-diaminopimelate = meso-2,6-diaminopimelate. Its pathway is amino-acid biosynthesis; L-lysine biosynthesis via DAP pathway; DL-2,6-diaminopimelate from LL-2,6-diaminopimelate: step 1/1. Catalyzes the stereoinversion of LL-2,6-diaminopimelate (L,L-DAP) to meso-diaminopimelate (meso-DAP), a precursor of L-lysine and an essential component of the bacterial peptidoglycan. This is Diaminopimelate epimerase from Helicobacter pylori (strain P12).